We begin with the raw amino-acid sequence, 327 residues long: Methionyl-tRNA formyltransferase (327 aa).

121–124 provides a ligand contact to (6S)-5,6,7,8-tetrahydrofolate; it reads SLLP.

This sequence belongs to the Fmt family.

It carries out the reaction L-methionyl-tRNA(fMet) + (6R)-10-formyltetrahydrofolate = N-formyl-L-methionyl-tRNA(fMet) + (6S)-5,6,7,8-tetrahydrofolate + H(+). Functionally, attaches a formyl group to the free amino group of methionyl-tRNA(fMet). The formyl group appears to play a dual role in the initiator identity of N-formylmethionyl-tRNA by promoting its recognition by IF2 and preventing the misappropriation of this tRNA by the elongation apparatus. The chain is Methionyl-tRNA formyltransferase from Burkholderia ambifaria (strain ATCC BAA-244 / DSM 16087 / CCUG 44356 / LMG 19182 / AMMD) (Burkholderia cepacia (strain AMMD)).